Here is a 1353-residue protein sequence, read N- to C-terminus: Adenylate cyclase type 9 (1353 aa).

2 disordered regions span residues 1–27 (MASP…DSNS) and 49–71 (SISS…GGGG). At 1 to 117 (MASPPHQQLL…CFPQTQRRFR (117 aa)) the chain is on the cytoplasmic side. Over residues 16-27 (EVSCDSSGDSNS) the composition is skewed to polar residues. Residues 49–66 (SISSSCSSSGDSGGVPRR) show a composition bias toward low complexity. The helical transmembrane segment at 118–138 (YALFYIGFACLLWSIYFAVHM) threads the bilayer. Residues 139-141 (RSR) are Extracellular-facing. The chain crosses the membrane as a helical span at residues 142-162 (LIVMVAPALCFLLVCVGFFLF). Residues 163–171 (TFTKLYARH) are Cytoplasmic-facing. The chain crosses the membrane as a helical span at residues 172–192 (YAWTSLALTLLVFALTLAAQF). Residues 193-215 (QVLTPVSGRGDSSNLTATARPTD) lie on the Extracellular side of the membrane. An N-linked (GlcNAc...) asparagine glycan is attached at asparagine 206. A helical membrane pass occupies residues 216 to 235 (TCLSQVGSFSMCIEVLFLLY). Residues 236–241 (TVMHLP) lie on the Cytoplasmic side of the membrane. The helical transmembrane segment at 242-259 (LYLSLCLGVAYSVLFETF) threads the bilayer. Over 260–280 (GYHFRDEACFPSPGAGALHWE) the chain is Extracellular. Residues 281–301 (LLSRGLLHGCIHAIGVHLFVM) form a helical membrane-spanning segment. The Cytoplasmic portion of the chain corresponds to 302–786 (SQVRSRSTFL…VKTFASPTFS (485 aa)). Residues 349–375 (QGDEESENSVKRHATSSPKNRKKKSSI) form a disordered region. Positions 359 to 374 (KRHATSSPKNRKKKSS) are enriched in basic residues. One can recognise a Guanylate cyclase 1 domain in the interval 394 to 521 (SILFADIVGF…NDVNLANLME (128 aa)). Aspartate 399, isoleucine 400, and aspartate 443 together coordinate Mg(2+). Residues 399 to 404 (DIVGFT), 441 to 443 (LGD), and arginine 487 each bind ATP. Serine 610 is subject to Phosphoserine. The disordered stretch occupies residues 642-684 (EAGAEGGAPQNGCQDEHKNSTKASGGPNPKTQNGLLSPPQEEK). 3 positions are modified to phosphoserine: serine 688, serine 691, and serine 706. The helical transmembrane segment at 787-807 (SLLDVFLSTTVFLTLSTTCFL) threads the bilayer. At 808–818 (KYEAATVPPPP) the chain is on the extracellular side. A helical membrane pass occupies residues 819–839 (AALAVFSAALLLEVLSLAVSI). Residues 840–867 (RMVFFLEDVMACTKRLLEWIAGWLPRHC) are Cytoplasmic-facing. A helical membrane pass occupies residues 868-888 (IGAILVSLPALAVYSHVTSEY). Residues 889 to 891 (ETN) are Extracellular-facing. A helical transmembrane segment spans residues 892 to 912 (IHFPVFTGSAALIAVVHYCNF). Residues 913-920 (CQLSSWMR) are Cytoplasmic-facing. Residues 921-941 (SSLATVVGAGPLLLLYVSLCP) traverse the membrane as a helical segment. Residues 942-975 (DSSVLTSPLDAVQNFSSERNPCNSSVPRDLRRPA) lie on the Extracellular side of the membrane. 2 N-linked (GlcNAc...) asparagine glycosylation sites follow: asparagine 955 and asparagine 964. Residues 976–996 (SLIGQEVVLVFFLLLLLVWFL) form a helical membrane-spanning segment. Residues 997–1353 (NREFEVSYRL…LTKLNVSKSV (357 aa)) lie on the Cytoplasmic side of the membrane. Residues 1058 to 1198 (GVIFASIVNF…DTVNIASRMD (141 aa)) enclose the Guanylate cyclase 2 domain. ATP-binding positions include lysine 1108, 1185–1187 (DIW), 1192–1196 (NIASR), and lysine 1232. Serine 1257, serine 1259, serine 1295, and serine 1307 each carry phosphoserine. Over residues 1292 to 1301 (SLGSDSSTQA) the composition is skewed to polar residues. Residues 1292–1326 (SLGSDSSTQAKDAHLSPKRPWKEPVKAEERGRFGK) are disordered. The segment covering 1302 to 1326 (KDAHLSPKRPWKEPVKAEERGRFGK) has biased composition (basic and acidic residues).

It belongs to the adenylyl cyclase class-4/guanylyl cyclase family. Requires Mg(2+) as cofactor. The cofactor is Mn(2+). As to expression, detected in skeletal muscle, pancreas, lung, heart, kidney, liver, brain and placenta. Expressed in multiple cells of the lung, with expression highest in airway smooth muscle.

It is found in the cell membrane. It carries out the reaction ATP = 3',5'-cyclic AMP + diphosphate. With respect to regulation, insensitive to calcium/calmodulin, forskolin and somatostatin. Stimulated by beta-adrenergic receptor activation. Activity is down-regulated by calcium/calcineurin. Adenylyl cyclase that catalyzes the formation of the signaling molecule cAMP in response to activation of G protein-coupled receptors. Contributes to signaling cascades activated by CRH (corticotropin-releasing factor), corticosteroids and beta-adrenergic receptors. The protein is Adenylate cyclase type 9 (ADCY9) of Homo sapiens (Human).